The sequence spans 412 residues: Multifunctional CCA protein (412 aa).

ATP contacts are provided by Gly8 and Arg11. Positions 8 and 11 each coordinate CTP. The Mg(2+) site is built by Asp21 and Asp23. ATP-binding residues include Arg91, Arg138, and Arg141. 3 residues coordinate CTP: Arg91, Arg138, and Arg141. In terms of domain architecture, HD spans 229 to 334; that stretch reads RGQHTLLALQ…LELFNQLDVW (106 aa).

Belongs to the tRNA nucleotidyltransferase/poly(A) polymerase family. Bacterial CCA-adding enzyme type 1 subfamily. In terms of assembly, monomer. Can also form homodimers and oligomers. Requires Mg(2+) as cofactor. Ni(2+) is required as a cofactor.

It carries out the reaction a tRNA precursor + 2 CTP + ATP = a tRNA with a 3' CCA end + 3 diphosphate. The catalysed reaction is a tRNA with a 3' CCA end + 2 CTP + ATP = a tRNA with a 3' CCACCA end + 3 diphosphate. Its function is as follows. Catalyzes the addition and repair of the essential 3'-terminal CCA sequence in tRNAs without using a nucleic acid template. Adds these three nucleotides in the order of C, C, and A to the tRNA nucleotide-73, using CTP and ATP as substrates and producing inorganic pyrophosphate. tRNA 3'-terminal CCA addition is required both for tRNA processing and repair. Also involved in tRNA surveillance by mediating tandem CCA addition to generate a CCACCA at the 3' terminus of unstable tRNAs. While stable tRNAs receive only 3'-terminal CCA, unstable tRNAs are marked with CCACCA and rapidly degraded. The sequence is that of Multifunctional CCA protein from Haemophilus ducreyi (strain 35000HP / ATCC 700724).